The primary structure comprises 435 residues: Matrix remodeling-associated protein 8 (435 aa).

The signal sequence occupies residues 1–22; sequence MEIRCKVLVCHIILLHSATVYL. At 23 to 337 the chain is on the extracellular side; the sequence is YSVPASQQNP…QESRLHFFQQ (315 aa). 2 Ig-like V-type domains span residues 32-158 and 156-293; these read PESV…LNIT and NITK…LSVS. N-linked (GlcNAc...) asparagine glycosylation is found at N41, N120, N156, N245, and N324. A disulfide bond links C54 and C138. A disulfide bridge connects residues C187 and C273. A helical membrane pass occupies residues 338-358; the sequence is LGYILATLLLFILLLTAVILI. Residues 359–435 lie on the Cytoplasmic side of the membrane; the sequence is TRKHQKRGYA…DLELRKEYCK (77 aa).

In terms of assembly, homodimer in cis. Does not appear to form trans-homodimers.

Its subcellular location is the cell membrane. Transmembrane protein which can modulate activity of various signaling pathways, probably via binding to integrin ITGAV:ITGB3. Mediates heterophilic cell-cell interactions in vitro. The polypeptide is Matrix remodeling-associated protein 8 (mxra8) (Xenopus laevis (African clawed frog)).